The primary structure comprises 296 residues: Sulfotransferase 1C2 (296 aa).

49 to 54 (KAGTTW) serves as a coordination point for 3'-phosphoadenylyl sulfate. 107 to 109 (KTH) is a binding site for substrate. Histidine 109 acts as the Proton acceptor in catalysis. 3'-phosphoadenylyl sulfate is bound by residues arginine 131, serine 139, tyrosine 194, and 228–233 (TSFEKM). The residue at position 139 (serine 139) is a Phosphoserine. Serine 254 carries the phosphoserine modification. 3'-phosphoadenylyl sulfate is bound at residue 256–260 (FMRKG).

The protein belongs to the sulfotransferase 1 family. As to expression, found in adult stomach, kidney and thyroid gland, and in fetal kidney and liver.

Its subcellular location is the cytoplasm. The protein resides in the lysosome. It is found in the mitochondrion. The enzyme catalyses a phenol + 3'-phosphoadenylyl sulfate = an aryl sulfate + adenosine 3',5'-bisphosphate + H(+). It catalyses the reaction cholesterol + 3'-phosphoadenylyl sulfate = cholesterol sulfate + adenosine 3',5'-bisphosphate + H(+). Its function is as follows. Sulfotransferase that utilizes 3'-phospho-5'-adenylyl sulfate (PAPS) to catalyze the sulfate conjugation of phenolic compounds. Does not transfer sulfate to steroids, dopamine, acetaminophen, or alpha-naphthol. Except in mitochondria, where it can add sulfate to cholesterol producing cholesterol sulfate, which alters mitochondrial membrane organization, and impacts protein complex mobility increasing state-III respiration, thereby modulating mitochondrial respiration. Catalyzes the sulfation of the carcinogenic N-hydroxy-2-acetylaminofluorene leading to highly reactive intermediates capable of forming DNA adducts, potentially resulting in mutagenesis. In Homo sapiens (Human), this protein is Sulfotransferase 1C2 (SULT1C2).